Consider the following 228-residue polypeptide: Ribonuclease S-1 (228 aa).

The N-terminal stretch at 1-27 (MGVTGMTYMFTMVFSLIVLILSSSTVG) is a signal peptide. Residue Gln-36 participates in RNA binding. The cysteines at positions 42 and 49 are disulfide-linked. Residue His-60 participates in RNA binding. Residue His-60 is the Proton donor of the active site. Cys-75 and Cys-119 are oxidised to a cystine. The N-linked (GlcNAc...) asparagine glycan is linked to Asn-87. 98 to 99 (NV) lines the RNA pocket. Asn-101 carries an N-linked (GlcNAc...) asparagine glycan. RNA-binding positions include Phe-108, 111–112 (KE), and 115–116 (KH). The active site involves Glu-112. The active-site Proton acceptor is the His-116. 3 N-linked (GlcNAc...) asparagine glycosylation sites follow: Asn-144, Asn-157, and Asn-175. Intrachain disulfides connect Cys-183/Cys-222 and Cys-199/Cys-210.

Belongs to the RNase T2 family. N-linked core structure at Asn-87 and Asn-101 contains xylose and fucose or consists of disaccharide (GlcNAc-GlcNAc). N-linked core structure at Asn-144 contains xylose.

It catalyses the reaction a ribonucleotidyl-ribonucleotide-RNA + H2O = a 3'-end 3'-phospho-ribonucleotide-RNA + a 5'-end dephospho-ribonucleoside-RNA + H(+). Self-incompatibility (SI) is the inherited ability of a flowering plant to prevent self-fertilization by discriminating between self and non-self pollen during pollination. In many species, self-incompatibility is controlled by the single, multiallelic locus S. The polypeptide is Ribonuclease S-1 (Pyrus pyrifolia (Chinese pear)).